The chain runs to 88 residues: Arminin 1a (88 aa).

The N-terminal stretch at 1–18 (MKTVLAFLFLPFIAFTHA) is a signal peptide. The propeptide occupies 19 to 57 (ESYEDVKEEIKNEAEKEIFEDLEEESDALDSSVREFNDA). Valine 85 carries the post-translational modification Valine amide.

It belongs to the arminin family. Expressed in entodermal epithelium along the body column.

The protein resides in the secreted. Its subcellular location is the target cell membrane. Antimicrobial peptide with a broad-spectrum antimicrobial activity. Shows very strong bactericidal activity against B.megaterium (MBC=0.1 uM), E.coli (MBC=0.2 uM), S.aureus (MBC=0.4 uM), methicillin-resistant S.aureus (MRSA) (MBC=0.4-0.8 uM), vancomycin-resistant enterococci (VRE) (E.faecalis (MBC=1.6 uM), and E.faecium (MBC=0.4-0.8 uM)), and extended-spectrum beta-lactamase (ESBL)-producing enterobacteriaceae strains (K.pneumoniae (MBC=0.4-0.8 uM), E.coli (MBC=0.2-0.4 uM)). Keeps its antibacterial activity under a wide range of salt concentrations that mimic physiological conditions of human blood, which is surprising, since Hydra is an obligate freshwater animal with nearly no salt tolerance. Does not affect red blood cells. In Hydra vulgaris (Hydra), this protein is Arminin 1a.